The chain runs to 552 residues: Non-structural protein NS1 (552 aa).

It belongs to the orbivirus non-structural protein NS1 family.

This is Non-structural protein NS1 (Segment-5) from Antilocapra americana (Pronghorn).